A 510-amino-acid chain; its full sequence is Inositol-3-phosphate synthase (510 aa).

NAD(+) contacts are provided by glycine 70, glycine 71, asparagine 72, asparagine 73, aspartate 143, isoleucine 180, glutamine 190, arginine 193, threonine 230, alanine 231, asparagine 232, threonine 233, glycine 281, serine 282, aspartate 306, serine 309, asparagine 340, asparagine 341, aspartate 342, lysine 355, glycine 393, aspartate 394, aspartate 422, and serine 423.

It belongs to the myo-inositol 1-phosphate synthase family. Requires NAD(+) as cofactor.

Its subcellular location is the cytoplasm. The protein localises to the cytosol. It localises to the nucleus. The catalysed reaction is D-glucose 6-phosphate = 1D-myo-inositol 3-phosphate. Its pathway is polyol metabolism; myo-inositol biosynthesis; myo-inositol from D-glucose 6-phosphate: step 1/2. Functionally, key enzyme in myo-inositol biosynthesis pathway that catalyzes the conversion of glucose 6-phosphate to 1-myo-inositol 1-phosphate in a NAD-dependent manner. The chain is Inositol-3-phosphate synthase (INPS1) from Nicotiana paniculata.